Reading from the N-terminus, the 126-residue chain is Protein ApaG (126 aa).

The ApaG domain maps to 2–126; that stretch reads RRKPYELKVE…FSLAIPRRLH (125 aa).

The polypeptide is Protein ApaG (Methylococcus capsulatus (strain ATCC 33009 / NCIMB 11132 / Bath)).